A 431-amino-acid chain; its full sequence is D-inositol 3-phosphate glycosyltransferase (431 aa).

1D-myo-inositol 3-phosphate is bound at residue His-21. UDP-N-acetyl-alpha-D-glucosamine-binding positions include 27–28 (QP) and Gly-35. Residues 32–37 (DAGGMN), Arg-90, Tyr-123, Thr-147, and Arg-167 each bind 1D-myo-inositol 3-phosphate. 3 residues coordinate UDP-N-acetyl-alpha-D-glucosamine: Arg-241, Lys-246, and Gln-307. Tyr-316, Arg-317, and Ala-319 together coordinate Mg(2+). Residues Glu-329 and Glu-337 each coordinate UDP-N-acetyl-alpha-D-glucosamine. Thr-343 contributes to the Mg(2+) binding site.

It belongs to the glycosyltransferase group 1 family. MshA subfamily. As to quaternary structure, homodimer.

It catalyses the reaction 1D-myo-inositol 3-phosphate + UDP-N-acetyl-alpha-D-glucosamine = 1D-myo-inositol 2-acetamido-2-deoxy-alpha-D-glucopyranoside 3-phosphate + UDP + H(+). Functionally, catalyzes the transfer of a N-acetyl-glucosamine moiety to 1D-myo-inositol 3-phosphate to produce 1D-myo-inositol 2-acetamido-2-deoxy-glucopyranoside 3-phosphate in the mycothiol biosynthesis pathway. This Saccharomonospora viridis (strain ATCC 15386 / DSM 43017 / JCM 3036 / CCUG 5913 / NBRC 12207 / NCIMB 9602 / P101) (Thermoactinomyces viridis) protein is D-inositol 3-phosphate glycosyltransferase.